The primary structure comprises 184 residues: Adenylate kinase (184 aa).

Residue 12-17 (GAGKGT) participates in ATP binding. Residues 32 to 61 (STGELLRKEIDLDTDLGKQVKDIMNRGELV) are NMP. Residues T33, R38, 59–61 (ELV), 85–88 (GYPR), and Q92 each bind AMP. Residues 126 to 132 (IRGRKDD) form an LID region. Residue R127 coordinates ATP. R129 and R140 together coordinate AMP. G168 is an ATP binding site.

It belongs to the adenylate kinase family. Monomer.

The protein resides in the cytoplasm. It catalyses the reaction AMP + ATP = 2 ADP. It participates in purine metabolism; AMP biosynthesis via salvage pathway; AMP from ADP: step 1/1. Functionally, catalyzes the reversible transfer of the terminal phosphate group between ATP and AMP. Plays an important role in cellular energy homeostasis and in adenine nucleotide metabolism. The sequence is that of Adenylate kinase from Prochlorococcus marinus subsp. pastoris (strain CCMP1986 / NIES-2087 / MED4).